The chain runs to 292 residues: 4-hydroxybenzoate octaprenyltransferase (292 aa).

9 helical membrane passes run 24 to 44, 47 to 67, 97 to 117, 119 to 139, 145 to 165, 171 to 191, 214 to 234, 238 to 258, and 270 to 290; these read IGTL…NAGM, LTNF…GCVI, AISL…MLSV, TILL…MKRY, VVLG…SINA, WLLF…YAMV, HIIG…GALN, LSYW…QVLI, and FLNN…SYPV.

The protein belongs to the UbiA prenyltransferase family. Mg(2+) serves as cofactor.

The protein localises to the cell inner membrane. It carries out the reaction all-trans-octaprenyl diphosphate + 4-hydroxybenzoate = 4-hydroxy-3-(all-trans-octaprenyl)benzoate + diphosphate. It participates in cofactor biosynthesis; ubiquinone biosynthesis. Its function is as follows. Catalyzes the prenylation of para-hydroxybenzoate (PHB) with an all-trans polyprenyl group. Mediates the second step in the final reaction sequence of ubiquinone-8 (UQ-8) biosynthesis, which is the condensation of the polyisoprenoid side chain with PHB, generating the first membrane-bound Q intermediate 3-octaprenyl-4-hydroxybenzoate. This Pseudoalteromonas translucida (strain TAC 125) protein is 4-hydroxybenzoate octaprenyltransferase.